Consider the following 116-residue polypeptide: Non-specific lipid-transfer protein 5 (116 aa).

The signal sequence occupies residues 1-24; the sequence is MARSMKLACVVLVMCMIVAPMAEG. 4 disulfide bridges follow: cysteine 28/cysteine 75, cysteine 38/cysteine 52, cysteine 53/cysteine 98, and cysteine 73/cysteine 112.

This sequence belongs to the plant LTP family.

In terms of biological role, plant non-specific lipid-transfer proteins transfer phospholipids as well as galactolipids across membranes. May play a role in wax or cutin deposition in the cell walls of expanding epidermal cells and certain secretory tissues. This Lens culinaris (Lentil) protein is Non-specific lipid-transfer protein 5.